Here is a 327-residue protein sequence, read N- to C-terminus: DNA-directed RNA polymerase subunit alpha (327 aa).

The alpha N-terminal domain (alpha-NTD) stretch occupies residues 1–233; the sequence is MVREKVKVST…NLFIPFLHVE (233 aa). The tract at residues 264-327 is alpha C-terminal domain (alpha-CTD); that stretch reads TKELAFQYIF…KKILDILEKK (64 aa).

This sequence belongs to the RNA polymerase alpha chain family. In terms of assembly, in plastids the minimal PEP RNA polymerase catalytic core is composed of four subunits: alpha, beta, beta', and beta''. When a (nuclear-encoded) sigma factor is associated with the core the holoenzyme is formed, which can initiate transcription.

The protein resides in the plastid. It localises to the chloroplast. It carries out the reaction RNA(n) + a ribonucleoside 5'-triphosphate = RNA(n+1) + diphosphate. Functionally, DNA-dependent RNA polymerase catalyzes the transcription of DNA into RNA using the four ribonucleoside triphosphates as substrates. The polypeptide is DNA-directed RNA polymerase subunit alpha (Capsella bursa-pastoris (Shepherd's purse)).